The primary structure comprises 311 residues: Probable dihydroorotate dehydrogenase A (fumarate) (311 aa).

Substrate-binding positions include Lys45, Asn69–Leu73, and Asn128. Lys45–Thr46 contributes to the FMN binding site. Asn128 serves as a coordination point for FMN. The active-site Nucleophile is Cys131. Positions 165 and 193 each coordinate FMN. Residue Asn194–Ser195 coordinates substrate. Residues Gly220, Gly248–Gly249, and Gly270–Thr271 contribute to the FMN site.

This sequence belongs to the dihydroorotate dehydrogenase family. Type 1 subfamily. In terms of assembly, homodimer. Requires FMN as cofactor.

The protein resides in the cytoplasm. The enzyme catalyses (S)-dihydroorotate + fumarate = orotate + succinate. The protein operates within pyrimidine metabolism; UMP biosynthesis via de novo pathway. Functionally, catalyzes the conversion of dihydroorotate to orotate with fumarate as the electron acceptor. The polypeptide is Probable dihydroorotate dehydrogenase A (fumarate) (pyrDA) (Streptococcus pneumoniae serotype 4 (strain ATCC BAA-334 / TIGR4)).